The primary structure comprises 149 residues: UPF0260 protein PFLU_1520 (149 aa).

It belongs to the UPF0260 family.

The sequence is that of UPF0260 protein PFLU_1520 from Pseudomonas fluorescens (strain SBW25).